Reading from the N-terminus, the 43-residue chain is Protein PsbN (43 aa).

The helical transmembrane segment at 7–29 threads the bilayer; it reads ITIFLSGLLVSFTGYALYTAFGQ.

Belongs to the PsbN family.

It localises to the plastid membrane. Its function is as follows. May play a role in photosystem I and II biogenesis. This Cuscuta reflexa (Southern Asian dodder) protein is Protein PsbN.